We begin with the raw amino-acid sequence, 175 residues long: Flagellar assembly factor FliW (175 aa).

The protein belongs to the FliW family. Interacts with translational regulator CsrA and flagellin(s).

Its subcellular location is the cytoplasm. In terms of biological role, acts as an anti-CsrA protein, binds CsrA and prevents it from repressing translation of its target genes, one of which is flagellin. Binds to flagellin and participates in the assembly of the flagellum. In Bdellovibrio bacteriovorus (strain ATCC 15356 / DSM 50701 / NCIMB 9529 / HD100), this protein is Flagellar assembly factor FliW.